A 331-amino-acid chain; its full sequence is MSIATEIIGVPETLDHFQSDSYSPYHFFSSEQWAKFRADTPLTLTSDEVKRLRSMGDPIDLDEVRRIYLSLSRLLSAHVESSQMLFEQRNRFLSLSDVTKTPFVIGIAGSVAVGKSTTARVLKELLGRWPSSPKVDLVTTDGFLHPNAVLQREKLMQRKGFPESYDTAAILRFLSAIKAGQPDVKAPSYSHLVYDVLPDEYKIVDRPDILIFEGINVLQSRDLPAGGKIVPMVSDFFDFSIYIDAAEDLIHNWYVARFMRLRETAFRDPNSYFHRYASISDAEALEIAGDLWANINLKNLRQNILPTRPRADLILKKGKDHLIEQVALRKL.

109–116 (GSVAVGKS) is a binding site for ATP.

It belongs to the prokaryotic pantothenate kinase family.

The protein localises to the cytoplasm. The catalysed reaction is (R)-pantothenate + ATP = (R)-4'-phosphopantothenate + ADP + H(+). It functions in the pathway cofactor biosynthesis; coenzyme A biosynthesis; CoA from (R)-pantothenate: step 1/5. This Rhizobium leguminosarum bv. trifolii (strain WSM2304) protein is Pantothenate kinase.